Consider the following 121-residue polypeptide: ATP synthase epsilon chain (121 aa).

This sequence belongs to the ATPase epsilon chain family. In terms of assembly, F-type ATPases have 2 components, CF(1) - the catalytic core - and CF(0) - the membrane proton channel. CF(1) has five subunits: alpha(3), beta(3), gamma(1), delta(1), epsilon(1). CF(0) has three main subunits: a, b and c.

It is found in the cell membrane. Produces ATP from ADP in the presence of a proton gradient across the membrane. This is ATP synthase epsilon chain from Mycobacterium avium (strain 104).